The sequence spans 412 residues: Alpha-2,8-sialyltransferase 8E (412 aa).

The Cytoplasmic portion of the chain corresponds to 1–16 (MRYADPSANRDLLGNR). Residues 17-37 (TLLFIFICAFALVTLLQQILY) traverse the membrane as a helical; Signal-anchor for type II membrane protein segment. At 38–412 (SKSYIKRGFQ…RVHTGTCNCC (375 aa)) the chain is on the lumenal side. N-linked (GlcNAc...) asparagine glycans are attached at residues N58, N64, N73, and N92. 2 disulfide bridges follow: C200–C349 and C214–C409. Substrate-binding positions include N228 and 250–252 (NPS). An N-linked (GlcNAc...) asparagine glycan is attached at N277. 336–338 (STG) is a binding site for substrate. The Proton donor/acceptor role is filled by H384.

It belongs to the glycosyltransferase 29 family. In terms of tissue distribution, highly expressed in brain. Expressed at low levels in other tissues, including liver, testis, lung, placenta and spleen.

Its subcellular location is the golgi apparatus membrane. The catalysed reaction is a ganglioside GT1b (d18:1(4E)) + CMP-N-acetyl-beta-neuraminate = a ganglioside GQ1b (d18:1(4E)) + CMP + H(+). It catalyses the reaction a ganglioside GD3 (d18:1(4E)) + CMP-N-acetyl-beta-neuraminate = a ganglioside GT3 (d18:1(4E)) + CMP + H(+). It carries out the reaction a ganglioside GD1a (d18:1(4E)) + CMP-N-acetyl-beta-neuraminate = a ganglioside GT1a (d18:1(4E)) + CMP + H(+). The enzyme catalyses a ganglioside GM1b (d18:1(4E)) + CMP-N-acetyl-beta-neuraminate = a ganglioside GD1c (d18:1(4E)) + CMP + H(+). The catalysed reaction is a ganglioside GQ1c (d18:1(4E)) + CMP-N-acetyl-beta-neuraminate = a ganglioside GP1c (d18:1(4E)) + CMP + H(+). It functions in the pathway protein modification; protein glycosylation. In terms of biological role, involved in the synthesis of gangliosides GD1c, GT1a, GQ1b, GP1c and GT3 from GD1a, GT1b, GM1b and GD3 respectively. The sequence is that of Alpha-2,8-sialyltransferase 8E from Mus musculus (Mouse).